Consider the following 192-residue polypeptide: Putative molybdenum cofactor guanylyltransferase (192 aa).

GTP-binding positions include 8–10 (LAG), Lys21, Asp67, and Asp101. Residue Asp101 coordinates Mg(2+).

The protein belongs to the MobA family. Monomer. Mg(2+) serves as cofactor.

Its subcellular location is the cytoplasm. It catalyses the reaction Mo-molybdopterin + GTP + H(+) = Mo-molybdopterin guanine dinucleotide + diphosphate. Functionally, transfers a GMP moiety from GTP to Mo-molybdopterin (Mo-MPT) cofactor (Moco or molybdenum cofactor) to form Mo-molybdopterin guanine dinucleotide (Mo-MGD) cofactor. The sequence is that of Putative molybdenum cofactor guanylyltransferase from Neisseria meningitidis serogroup B (strain ATCC BAA-335 / MC58).